A 99-amino-acid polypeptide reads, in one-letter code: Large ribosomal subunit protein eL21 (99 aa).

Belongs to the eukaryotic ribosomal protein eL21 family.

This Methanocella arvoryzae (strain DSM 22066 / NBRC 105507 / MRE50) protein is Large ribosomal subunit protein eL21.